Here is a 387-residue protein sequence, read N- to C-terminus: MFRPRCGLRQKFVYVILKSILYSSWLLGIFPFKYEPKKRRLRRSMWLILFGVVISSSLLILMVKQSAEDREHGIMLDVFQRNALLYQISSLMGVVGVVSICTVHLRTLWRSKHLEEIYNGLMLLEAKYFCSNAVECPAFDGYVIQKGVVIVVGLLAPWMVHFGMPDSKLPVLNVLVVSMVKLGTLLLALHYHLGVVIIYRFVWLINRELLSLVCSLRGNHKGSSSRVRFLLKLYNKLVNLYSKLADCYDCQTVLMMAIFLAANIIVCFYMIVYRISLSKMSFFVMLIMFPLAIANNFMDFWLSMKVCDLLQKTGRQTSMILKLFNDIENMDKDLEISISDFALYCSHRRFKFLHCGLFHVNREMGFKMFVASVLYLLYLVQFDYMNL.

Residues 1-43 (MFRPRCGLRQKFVYVILKSILYSSWLLGIFPFKYEPKKRRLRR) lie on the Cytoplasmic side of the membrane. Residues 44–64 (SMWLILFGVVISSSLLILMVK) form a helical membrane-spanning segment. At 65–82 (QSAEDREHGIMLDVFQRN) the chain is on the extracellular side. Residues 83 to 103 (ALLYQISSLMGVVGVVSICTV) form a helical membrane-spanning segment. The Cytoplasmic portion of the chain corresponds to 104–142 (HLRTLWRSKHLEEIYNGLMLLEAKYFCSNAVECPAFDGY). A helical membrane pass occupies residues 143–163 (VIQKGVVIVVGLLAPWMVHFG). At 164-184 (MPDSKLPVLNVLVVSMVKLGT) the chain is on the extracellular side. The chain crosses the membrane as a helical span at residues 185-205 (LLLALHYHLGVVIIYRFVWLI). Topologically, residues 206–252 (NRELLSLVCSLRGNHKGSSSRVRFLLKLYNKLVNLYSKLADCYDCQT) are cytoplasmic. The helical transmembrane segment at 253 to 273 (VLMMAIFLAANIIVCFYMIVY) threads the bilayer. Over 274–281 (RISLSKMS) the chain is Extracellular. Residues 282 to 302 (FFVMLIMFPLAIANNFMDFWL) traverse the membrane as a helical segment. The Cytoplasmic portion of the chain corresponds to 303-363 (SMKVCDLLQK…HCGLFHVNRE (61 aa)). Residues 364-384 (MGFKMFVASVLYLLYLVQFDY) form a helical membrane-spanning segment. Over 385–387 (MNL) the chain is Extracellular.

It belongs to the insect chemoreceptor superfamily. Gustatory receptor (GR) family. Gr22e subfamily. In terms of tissue distribution, expressed in neurons of the dorsal pharyngeal sense organs of larvae.

The protein resides in the cell membrane. Probable gustatory receptor which mediates acceptance or avoidance behavior, depending on its substrates. The polypeptide is Putative gustatory receptor 22d (Drosophila melanogaster (Fruit fly)).